A 231-amino-acid chain; its full sequence is Sec-independent protein translocase protein TatB (231 aa).

The chain crosses the membrane as a helical span at residues 1 to 21 (MFDIGFSELLLFGVIALIVLG). Positions 77–168 (MRREMAEMRG…SLKTDFNDNA (92 aa)) are disordered. Over residues 101 to 111 (ASRDLVDDAKP) the composition is skewed to basic and acidic residues. Over residues 148-157 (SEQPSAQGDN) the composition is skewed to polar residues.

It belongs to the TatB family. In terms of assembly, the Tat system comprises two distinct complexes: a TatABC complex, containing multiple copies of TatA, TatB and TatC subunits, and a separate TatA complex, containing only TatA subunits. Substrates initially bind to the TatABC complex, which probably triggers association of the separate TatA complex to form the active translocon.

The protein resides in the cell inner membrane. Part of the twin-arginine translocation (Tat) system that transports large folded proteins containing a characteristic twin-arginine motif in their signal peptide across membranes. Together with TatC, TatB is part of a receptor directly interacting with Tat signal peptides. TatB may form an oligomeric binding site that transiently accommodates folded Tat precursor proteins before their translocation. The sequence is that of Sec-independent protein translocase protein TatB from Psychrobacter cryohalolentis (strain ATCC BAA-1226 / DSM 17306 / VKM B-2378 / K5).